The following is a 297-amino-acid chain: Beta-1,3-galactosyltransferase 5 (297 aa).

Topologically, residues 1–7 (MAFPKMR) are cytoplasmic. A helical; Signal-anchor for type II membrane protein membrane pass occupies residues 8–28 (LMYVCLLVLGALCVYFSMYSL). The Lumenal segment spans residues 29–297 (NLFKEQSFVY…KPRTLLDYWQ (269 aa)). N-linked (GlcNAc...) asparagine glycans are attached at residues Asn130, Asn174, and Asn231.

This sequence belongs to the glycosyltransferase 31 family.

Its subcellular location is the golgi apparatus membrane. It carries out the reaction a globoside Gb4Cer (d18:1(4E)) + UDP-alpha-D-galactose = a globoside GalGb4Cer (d18:1(4E)) + UDP + H(+). It functions in the pathway protein modification; protein glycosylation. In terms of biological role, catalyzes the transfer of Gal to GlcNAc-based acceptors with a preference for the core3 O-linked glycan GlcNAc(beta1,3)GalNAc structure. Can use glycolipid LC3Cer as an efficient acceptor. This is Beta-1,3-galactosyltransferase 5 (B3GALT5) from Pan troglodytes (Chimpanzee).